Here is a 619-residue protein sequence, read N- to C-terminus: Chaperone protein DnaK (619 aa).

Thr179 carries the post-translational modification Phosphothreonine; by autocatalysis. The interval 584-619 (QAKAQGAAGPQPGAQAQGQPNDGGKEDVVEAEVVDK) is disordered. Residues 585 to 605 (AKAQGAAGPQPGAQAQGQPND) are compositionally biased toward low complexity. Over residues 606 to 619 (GGKEDVVEAEVVDK) the composition is skewed to basic and acidic residues.

It belongs to the heat shock protein 70 family.

Functionally, acts as a chaperone. This Elusimicrobium minutum (strain Pei191) protein is Chaperone protein DnaK.